We begin with the raw amino-acid sequence, 89 residues long: Small ribosomal subunit protein uS15 (89 aa).

The protein belongs to the universal ribosomal protein uS15 family. In terms of assembly, part of the 30S ribosomal subunit. Forms a bridge to the 50S subunit in the 70S ribosome, contacting the 23S rRNA.

Functionally, one of the primary rRNA binding proteins, it binds directly to 16S rRNA where it helps nucleate assembly of the platform of the 30S subunit by binding and bridging several RNA helices of the 16S rRNA. Its function is as follows. Forms an intersubunit bridge (bridge B4) with the 23S rRNA of the 50S subunit in the ribosome. This Lactobacillus gasseri (strain ATCC 33323 / DSM 20243 / BCRC 14619 / CIP 102991 / JCM 1131 / KCTC 3163 / NCIMB 11718 / NCTC 13722 / AM63) protein is Small ribosomal subunit protein uS15.